A 663-amino-acid chain; its full sequence is Alpha-amylase MalA (663 aa).

Disordered regions lie at residues 1-28 (MHHPGPPRFVATGDEVELAPRDPDPTAT) and 80-135 (GTLE…LTLR). Over residues 92–111 (RSGGHSGGVSGGRSGPGRSG) the composition is skewed to gly residues. Residue aspartate 411 is the Nucleophile of the active site. The Proton donor role is filled by glutamate 440.

Belongs to the glycosyl hydrolase 13 family.

The protein resides in the cytoplasm. The catalysed reaction is Endohydrolysis of (1-&gt;4)-alpha-D-glucosidic linkages in polysaccharides containing three or more (1-&gt;4)-alpha-linked D-glucose units.. The protein operates within glycan degradation; starch degradation. Stable and active over a broad range of NaCl concentrations (0.5 to 4.2 M NaCl), with maximal activity at 2.6 M NaCl. 83% and 94% of the maximum activity at 0.6 and 4.2 M NaCl, respectively. Active and stable also in KCl. Its function is as follows. Alpha-amylase that cleaves starch into oligosaccharides, the first step in starch degradation. Endo-acting enzyme which prefers a linear polysaccharide to branched polysaccharides hydrolyzing alpha-1,4 glucosidic bonds efficiently. Also has transglycosylation activity, but does not act on alpha-1,6 bonds. Higher activities of 100%, 79% and 67.8% against amylose, soluble starch and amylopectin, respectively. Lower activity of 22% against glycogen and faint or no activity against alpha-, beta- and gamma-cyclodextrin. This chain is Alpha-amylase MalA, found in Haloarcula japonica (strain ATCC 49778 / DSM 6131 / JCM 7785 / NBRC 101032 / NCIMB 13157 / TR-1).